A 152-amino-acid polypeptide reads, in one-letter code: Large ribosomal subunit protein uL15 (152 aa).

Positions 1–66 (MRSNPMTLRL…GFEGGQTPMQ (66 aa)) are disordered. Over residues 28–38 (RGIGSGLGKTA) the composition is skewed to gly residues. The segment covering 39-52 (GRGHKGSFARKGGG) has biased composition (basic residues).

The protein belongs to the universal ribosomal protein uL15 family. Part of the 50S ribosomal subunit.

Functionally, binds to the 23S rRNA. The chain is Large ribosomal subunit protein uL15 from Xanthomonas oryzae pv. oryzae (strain KACC10331 / KXO85).